We begin with the raw amino-acid sequence, 157 residues long: Catabolic 3-dehydroquinase (157 aa).

The active-site Proton acceptor is Y27. Substrate is bound by residues N80, H86, and D93. H106 serves as the catalytic Proton donor. Residues 107 to 108 (VS) and R117 each bind substrate.

Belongs to the type-II 3-dehydroquinase family. As to quaternary structure, homododecamer. Adopts a ring-like structure, composed of an arrangement of two hexameric rings stacked on top of one another.

It carries out the reaction 3-dehydroquinate = 3-dehydroshikimate + H2O. Its pathway is aromatic compound metabolism; 3,4-dihydroxybenzoate biosynthesis; 3,4-dihydroxybenzoate from 3-dehydroquinate: step 1/2. Is involved in the catabolism of quinate. Allows the utilization of quinate as carbon source via the beta-ketoadipate pathway. The polypeptide is Catabolic 3-dehydroquinase (Pyricularia oryzae (strain 70-15 / ATCC MYA-4617 / FGSC 8958) (Rice blast fungus)).